A 90-amino-acid polypeptide reads, in one-letter code: MRDPVSSQYSSFLFWRMPIPELDLSELEGLGLSDTATYKIKDSSVGKMIGQATAADQEKNPEGDGLLEYSTFNFWRAPIASIHSFELDLL.

The short motif at 24–32 (LSELEGLGL) is the Nuclear export signal element. Phosphoserine is present on S84.

This sequence belongs to the MLLT11 family. In terms of assembly, interacts with HSPA8 and LAMP2 isoform A; the interaction may target MLLT11 for degradation via chaperone-mediated autophagy. Interacts with TCF7. In terms of processing, ubiquitinated, leading to degradation.

It localises to the nucleus. The protein resides in the cytoplasm. Its subcellular location is the cytoskeleton. It is found in the microtubule organizing center. The protein localises to the centrosome. Cofactor for the transcription factor TCF7. Involved in regulation of lymphoid development by driving multipotent hematopoietic progenitor cells towards a T-cell fate. This is Protein AF1q (MLLT11) from Pongo abelii (Sumatran orangutan).